The chain runs to 167 residues: Small ribosomal subunit protein uS5 (167 aa).

Residues 12 to 75 (LQEKLVQVNR…EAARRNMIQV (64 aa)) enclose the S5 DRBM domain.

The protein belongs to the universal ribosomal protein uS5 family. As to quaternary structure, part of the 30S ribosomal subunit. Contacts proteins S4 and S8.

Its function is as follows. With S4 and S12 plays an important role in translational accuracy. Functionally, located at the back of the 30S subunit body where it stabilizes the conformation of the head with respect to the body. The chain is Small ribosomal subunit protein uS5 from Alcanivorax borkumensis (strain ATCC 700651 / DSM 11573 / NCIMB 13689 / SK2).